Consider the following 400-residue polypeptide: Jasmonate-induced oxygenase 1 (400 aa).

Residues 248–349 (DVGACLRVNY…RVSLAFFYNP (102 aa)) form the Fe2OG dioxygenase domain. Arg254 is a binding site for jasmonate. The 2-oxoglutarate site is built by Asn256 and Tyr258. His273, Asp275, and His330 together coordinate Fe cation. 2-oxoglutarate contacts are provided by Arg340 and Ser342. Jasmonate contacts are provided by Arg379 and Arg383.

The protein belongs to the iron/ascorbate-dependent oxidoreductase family. Requires L-ascorbate as cofactor. The cofactor is Fe(2+).

It carries out the reaction jasmonate + 2-oxoglutarate + O2 = (1R,2R)-12-hydroxyjasmonate + succinate + CO2. Functionally, 2-oxoglutarate-dependent dioxygenase involved in the oxidation of jasmonate (JA), a stress-induced phytohormone synthesized in response to attack by pathogens and herbivores, which triggers the activation of defense responses via the JA-mediated signaling pathway. Converts JA to 12-hydroxyjasmonate (12OH-JA), an inactive form of JA. Prevents over-accumulation of JA and indirectly its bioactive form JA-Ile under stress response. Acts as a negative regulator of JA-mediated defense signaling, by contributing to 12OH-JA accumulation, which represses JA defense responses upon infection by the fungal pathogen Botrytis cinerea and the herbivorous caterpillar Mamestra brassicae. The sequence is that of Jasmonate-induced oxygenase 1 from Arabidopsis thaliana (Mouse-ear cress).